The chain runs to 98 residues: NADH-ubiquinone oxidoreductase chain 4L (98 aa).

3 helical membrane passes run 1–21, 27–47, and 61–81; these read MIPTYMNIMLAFTISLLGMLT, VASLLCLEGMTMSLFIMTALI, and IILLVFAACEAAVGLALLISI.

Belongs to the complex I subunit 4L family. Core subunit of respiratory chain NADH dehydrogenase (Complex I) which is composed of 45 different subunits.

It localises to the mitochondrion inner membrane. The enzyme catalyses a ubiquinone + NADH + 5 H(+)(in) = a ubiquinol + NAD(+) + 4 H(+)(out). Core subunit of the mitochondrial membrane respiratory chain NADH dehydrogenase (Complex I) which catalyzes electron transfer from NADH through the respiratory chain, using ubiquinone as an electron acceptor. Part of the enzyme membrane arm which is embedded in the lipid bilayer and involved in proton translocation. This is NADH-ubiquinone oxidoreductase chain 4L (MT-ND4L) from Macaca sylvanus (Barbary macaque).